Consider the following 215-residue polypeptide: Pyridoxine/pyridoxamine 5'-phosphate oxidase (215 aa).

Substrate contacts are provided by residues 9–12 (RRDY) and Lys69. FMN-binding positions include 64–69 (RVLLLK), 79–80 (FS), Lys86, and Gln108. Tyr126, Arg130, and Ser134 together coordinate substrate. FMN-binding positions include 143–144 (QS) and Trp188. Residue 194–196 (RLH) participates in substrate binding. Arg198 contributes to the FMN binding site.

It belongs to the pyridoxamine 5'-phosphate oxidase family. Homodimer. FMN is required as a cofactor.

It catalyses the reaction pyridoxamine 5'-phosphate + O2 + H2O = pyridoxal 5'-phosphate + H2O2 + NH4(+). The enzyme catalyses pyridoxine 5'-phosphate + O2 = pyridoxal 5'-phosphate + H2O2. The protein operates within cofactor metabolism; pyridoxal 5'-phosphate salvage; pyridoxal 5'-phosphate from pyridoxamine 5'-phosphate: step 1/1. Its pathway is cofactor metabolism; pyridoxal 5'-phosphate salvage; pyridoxal 5'-phosphate from pyridoxine 5'-phosphate: step 1/1. In terms of biological role, catalyzes the oxidation of either pyridoxine 5'-phosphate (PNP) or pyridoxamine 5'-phosphate (PMP) into pyridoxal 5'-phosphate (PLP). The chain is Pyridoxine/pyridoxamine 5'-phosphate oxidase from Azotobacter vinelandii (strain DJ / ATCC BAA-1303).